We begin with the raw amino-acid sequence, 337 residues long: 4-hydroxythreonine-4-phosphate dehydrogenase (337 aa).

Substrate contacts are provided by histidine 138 and threonine 139. Positions 168, 212, and 267 each coordinate a divalent metal cation. Substrate contacts are provided by lysine 275, asparagine 284, and arginine 293.

The protein belongs to the PdxA family. In terms of assembly, homodimer. Zn(2+) is required as a cofactor. Mg(2+) serves as cofactor. The cofactor is Co(2+).

It localises to the cytoplasm. The enzyme catalyses 4-(phosphooxy)-L-threonine + NAD(+) = 3-amino-2-oxopropyl phosphate + CO2 + NADH. It participates in cofactor biosynthesis; pyridoxine 5'-phosphate biosynthesis; pyridoxine 5'-phosphate from D-erythrose 4-phosphate: step 4/5. Catalyzes the NAD(P)-dependent oxidation of 4-(phosphooxy)-L-threonine (HTP) into 2-amino-3-oxo-4-(phosphooxy)butyric acid which spontaneously decarboxylates to form 3-amino-2-oxopropyl phosphate (AHAP). The sequence is that of 4-hydroxythreonine-4-phosphate dehydrogenase from Beijerinckia indica subsp. indica (strain ATCC 9039 / DSM 1715 / NCIMB 8712).